A 118-amino-acid chain; its full sequence is Small ribosomal subunit protein uS13 (118 aa).

Residues 92 to 118 (RRGHPLRGQRTRTNARTRKGPRKAIRK) form a disordered region.

This sequence belongs to the universal ribosomal protein uS13 family. As to quaternary structure, part of the 30S ribosomal subunit. Forms a loose heterodimer with protein S19. Forms two bridges to the 50S subunit in the 70S ribosome.

In terms of biological role, located at the top of the head of the 30S subunit, it contacts several helices of the 16S rRNA. In the 70S ribosome it contacts the 23S rRNA (bridge B1a) and protein L5 of the 50S subunit (bridge B1b), connecting the 2 subunits; these bridges are implicated in subunit movement. Contacts the tRNAs in the A and P-sites. This is Small ribosomal subunit protein uS13 from Xanthomonas campestris pv. campestris (strain ATCC 33913 / DSM 3586 / NCPPB 528 / LMG 568 / P 25).